A 351-amino-acid polypeptide reads, in one-letter code: Anaerobic nitrite reductase Glb1-2 (351 aa).

Globin domains follow at residues 13 to 162 (DFTE…VEMK) and 184 to 333 (CFTE…AEMK). Residues Ser-56, Lys-70, His-74, Lys-104, Thr-108, His-109, Ser-227, Lys-241, His-245, Lys-275, Thr-279, and His-280 each coordinate heme b. Positions 331 to 351 (EMKKTDHDHQTNVEDKSKPSS) are disordered.

It belongs to the plant globin family. In terms of assembly, monomer. The cofactor is heme b. As to expression, predominantly expressed in nodules and roots, and, to a lesser extent, in leaves, at low levels in pods, but barely in stems, petioles, buds and flowers. Mainly expressed in nodules and roots at low levels, and barely in leaves. In terms of tissue distribution, expressed at very low levels in nodules, roots and pods.

It is found in the cytoplasm. The protein localises to the nucleus. The enzyme catalyses Fe(III)-heme b-[protein] + nitric oxide + H2O = Fe(II)-heme b-[protein] + nitrite + 2 H(+). Functionally, phytoglobin that regulates the fine tuning of nitric oxide (NO) concentration in the cytosol in response to sudden changes in O(2) availability, and performs both symbiotic and nonsymbiotic functions. Exhibits NO dioxygenase activity in the presence of O(2) but nitrite reductase (NiR) activity in the absence of O(2) (e.g. during flooding or in waterlogged soil). May not function as an oxygen storage or transport protein. Extremely reactive toward the physiological ligands O(2), nitric oxide (NO), and nitrite with a very high affinity for O(2) through an hexacoordinate heme iron because of a very low dissociation constant. Very high affinity for O(2) through two hexacoordinate heme irons. Extremely reactive toward the physiological ligands O(2), nitric oxide (NO), and nitrite. Its function is as follows. Very high affinity for O(2) through a single hexacoordinate heme iron. Extremely reactive toward the physiological ligands O(2), nitric oxide (NO), and nitrite. The chain is Anaerobic nitrite reductase Glb1-2 from Medicago truncatula (Barrel medic).